The sequence spans 245 residues: 1-(5-phosphoribosyl)-5-[(5-phosphoribosylamino)methylideneamino] imidazole-4-carboxamide isomerase (245 aa).

Catalysis depends on Asp-10, which acts as the Proton acceptor. Asp-135 (proton donor) is an active-site residue.

This sequence belongs to the HisA/HisF family.

The protein localises to the cytoplasm. It catalyses the reaction 1-(5-phospho-beta-D-ribosyl)-5-[(5-phospho-beta-D-ribosylamino)methylideneamino]imidazole-4-carboxamide = 5-[(5-phospho-1-deoxy-D-ribulos-1-ylimino)methylamino]-1-(5-phospho-beta-D-ribosyl)imidazole-4-carboxamide. It participates in amino-acid biosynthesis; L-histidine biosynthesis; L-histidine from 5-phospho-alpha-D-ribose 1-diphosphate: step 4/9. This is 1-(5-phosphoribosyl)-5-[(5-phosphoribosylamino)methylideneamino] imidazole-4-carboxamide isomerase from Methanosarcina barkeri (strain Fusaro / DSM 804).